A 428-amino-acid polypeptide reads, in one-letter code: Divergent protein kinase domain 1A (428 aa).

Residues 1 to 27 (MARGLFSRAWLSKTHHFQARLSYIRVK) are Cytoplasmic-facing. A helical transmembrane segment spans residues 28 to 48 (YLFLTWLAVFVSSWVVYVQYS). At 49 to 428 (TYTELCRGRE…WKQISHTTDS (380 aa)) the chain is on the lumenal side.

Belongs to the DIPK family. Among the many cysteines in the lumenal domain, most are probably involved in disulfide bonds.

The protein localises to the endoplasmic reticulum membrane. This Danio rerio (Zebrafish) protein is Divergent protein kinase domain 1A (dipk1a).